A 227-amino-acid polypeptide reads, in one-letter code: Ribonuclease S-5 (227 aa).

Positions 1-27 (MGITGMVYVVTMVFLLIVLILSSSTVG) are cleaved as a signal peptide. Glutamine 36 is an RNA binding site. Cysteine 42 and cysteine 49 are disulfide-bonded. A glycan (N-linked (GlcNAc...) asparagine) is linked at asparagine 45. Residues histidine 60, 97–98 (NV), phenylalanine 107, 110–111 (KE), and 114–115 (KH) contribute to the RNA site. Histidine 60 functions as the Proton donor in the catalytic mechanism. Cysteine 75 and cysteine 118 form a disulfide bridge. Glutamate 111 is a catalytic residue. The active-site Proton acceptor is the histidine 115. Asparagine 143 carries an N-linked (GlcNAc...) asparagine glycan. 2 disulfides stabilise this stretch: cysteine 182/cysteine 220 and cysteine 197/cysteine 208.

This sequence belongs to the RNase T2 family. Post-translationally, N-glycan at Asn-45 consists of disaccharide (GlcNAc-GlcNAc). N-linked core structure at Asn-143 contains xylose.

The catalysed reaction is a ribonucleotidyl-ribonucleotide-RNA + H2O = a 3'-end 3'-phospho-ribonucleotide-RNA + a 5'-end dephospho-ribonucleoside-RNA + H(+). Its function is as follows. Self-incompatibility (SI) is the inherited ability of a flowering plant to prevent self-fertilization by discriminating between self and non-self pollen during pollination. In many species, self-incompatibility is controlled by the single, multiallelic locus S. In Pyrus pyrifolia (Chinese pear), this protein is Ribonuclease S-5.